A 388-amino-acid chain; its full sequence is Succinate--CoA ligase [ADP-forming] subunit beta (388 aa).

In terms of domain architecture, ATP-grasp spans 9-244 (KSLFAEYGLP…PSQDDAREAH (236 aa)). ATP is bound by residues K46, 53–55 (GRG), E99, T102, and E107. Mg(2+) contacts are provided by N199 and D213. Substrate is bound by residues N264 and 321 to 323 (GIV).

It belongs to the succinate/malate CoA ligase beta subunit family. In terms of assembly, heterotetramer of two alpha and two beta subunits. Mg(2+) is required as a cofactor.

It carries out the reaction succinate + ATP + CoA = succinyl-CoA + ADP + phosphate. It catalyses the reaction GTP + succinate + CoA = succinyl-CoA + GDP + phosphate. It functions in the pathway carbohydrate metabolism; tricarboxylic acid cycle; succinate from succinyl-CoA (ligase route): step 1/1. Its function is as follows. Succinyl-CoA synthetase functions in the citric acid cycle (TCA), coupling the hydrolysis of succinyl-CoA to the synthesis of either ATP or GTP and thus represents the only step of substrate-level phosphorylation in the TCA. The beta subunit provides nucleotide specificity of the enzyme and binds the substrate succinate, while the binding sites for coenzyme A and phosphate are found in the alpha subunit. This Shewanella denitrificans (strain OS217 / ATCC BAA-1090 / DSM 15013) protein is Succinate--CoA ligase [ADP-forming] subunit beta.